The following is a 419-amino-acid chain: Putative competence-damage inducible protein (419 aa).

It belongs to the CinA family.

The polypeptide is Putative competence-damage inducible protein (Lysinibacillus sphaericus (strain C3-41)).